The primary structure comprises 394 residues: Deoxyguanosinetriphosphate triphosphohydrolase-like protein (394 aa).

The interval 1–34 is disordered; the sequence is MSSSPFFVPRAPYAEDPAKSRGRRFPEDESRTRT. Over residues 16–34 the composition is skewed to basic and acidic residues; it reads DPAKSRGRRFPEDESRTRT. In terms of domain architecture, HD spans 70–210; that stretch reads RLTHSLEVAQ…AALADDIAYN (141 aa).

Belongs to the dGTPase family. Type 2 subfamily.

This chain is Deoxyguanosinetriphosphate triphosphohydrolase-like protein, found in Caulobacter sp. (strain K31).